The following is a 257-amino-acid chain: Pimeloyl-[acyl-carrier protein] methyl ester esterase (257 aa).

The region spanning 16-240 (LVLIHGWGMN…EQASHAPFIS (225 aa)) is the AB hydrolase-1 domain. Substrate-binding positions include Trp-22, 82 to 83 (SL), and 143 to 147 (FMALQ). The Nucleophile role is filled by Ser-82. Residues Asp-207 and His-235 contribute to the active site. His-235 contacts substrate.

The protein belongs to the AB hydrolase superfamily. Carboxylesterase BioH family. As to quaternary structure, monomer.

The protein localises to the cytoplasm. It carries out the reaction 6-carboxyhexanoyl-[ACP] methyl ester + H2O = 6-carboxyhexanoyl-[ACP] + methanol + H(+). It participates in cofactor biosynthesis; biotin biosynthesis. Its function is as follows. The physiological role of BioH is to remove the methyl group introduced by BioC when the pimeloyl moiety is complete. It allows to synthesize pimeloyl-ACP via the fatty acid synthetic pathway through the hydrolysis of the ester bonds of pimeloyl-ACP esters. The protein is Pimeloyl-[acyl-carrier protein] methyl ester esterase of Aliivibrio fischeri (strain MJ11) (Vibrio fischeri).